The sequence spans 25 residues: Xenoposin precursor fragment BM3 (25 aa).

As to expression, expressed by the skin glands.

Its subcellular location is the secreted. Functionally, antimicrobial peptide. This chain is Xenoposin precursor fragment BM3, found in Xenopus boumbaensis (Mawa clawed frog).